The primary structure comprises 275 residues: Shikimate dehydrogenase (NADP(+)) (275 aa).

Shikimate-binding positions include 16 to 18 and Thr-63; that span reads SKS. Lys-67 serves as the catalytic Proton acceptor. Residues Asn-88 and Asp-104 each coordinate shikimate. Residues 129-133, 153-158, and Met-219 each bind NADP(+); these read GAGGA and NRTVAR. Shikimate is bound at residue Tyr-221. Gly-243 is an NADP(+) binding site.

This sequence belongs to the shikimate dehydrogenase family. Homodimer.

The catalysed reaction is shikimate + NADP(+) = 3-dehydroshikimate + NADPH + H(+). Its pathway is metabolic intermediate biosynthesis; chorismate biosynthesis; chorismate from D-erythrose 4-phosphate and phosphoenolpyruvate: step 4/7. Functionally, involved in the biosynthesis of the chorismate, which leads to the biosynthesis of aromatic amino acids. Catalyzes the reversible NADPH linked reduction of 3-dehydroshikimate (DHSA) to yield shikimate (SA). The chain is Shikimate dehydrogenase (NADP(+)) from Marinobacter nauticus (strain ATCC 700491 / DSM 11845 / VT8) (Marinobacter aquaeolei).